The chain runs to 278 residues: Tryptophan synthase alpha chain (278 aa).

Residues Glu-50 and Asp-61 each act as proton acceptor in the active site.

This sequence belongs to the TrpA family. In terms of assembly, tetramer of two alpha and two beta chains.

It carries out the reaction (1S,2R)-1-C-(indol-3-yl)glycerol 3-phosphate + L-serine = D-glyceraldehyde 3-phosphate + L-tryptophan + H2O. It functions in the pathway amino-acid biosynthesis; L-tryptophan biosynthesis; L-tryptophan from chorismate: step 5/5. In terms of biological role, the alpha subunit is responsible for the aldol cleavage of indoleglycerol phosphate to indole and glyceraldehyde 3-phosphate. This Rhodopseudomonas palustris (strain HaA2) protein is Tryptophan synthase alpha chain.